The following is a 465-amino-acid chain: ATP-dependent protease ATPase subunit HslU (465 aa).

ATP contacts are provided by residues Val19 and 61-66 (GVGKTE). The interval 153 to 175 (LFQSDGSDGDDETTEQDSHDEIR) is disordered. Asp279, Glu343, and Arg415 together coordinate ATP.

The protein belongs to the ClpX chaperone family. HslU subfamily. As to quaternary structure, a double ring-shaped homohexamer of HslV is capped on each side by a ring-shaped HslU homohexamer. The assembly of the HslU/HslV complex is dependent on binding of ATP.

It localises to the cytoplasm. In terms of biological role, ATPase subunit of a proteasome-like degradation complex; this subunit has chaperone activity. The binding of ATP and its subsequent hydrolysis by HslU are essential for unfolding of protein substrates subsequently hydrolyzed by HslV. HslU recognizes the N-terminal part of its protein substrates and unfolds these before they are guided to HslV for hydrolysis. The protein is ATP-dependent protease ATPase subunit HslU of Oceanobacillus iheyensis (strain DSM 14371 / CIP 107618 / JCM 11309 / KCTC 3954 / HTE831).